The sequence spans 871 residues: Zinc finger protein 473 (871 aa).

A KRAB domain is found at valine 6 to proline 75. 2 disordered regions span residues proline 47–lysine 81 and asparagine 140–threonine 164. Polar residues predominate over residues glutamate 71–lysine 81. Residues threonine 145 to arginine 154 show a composition bias toward basic and acidic residues. Residue lysine 148 forms a Glycyl lysine isopeptide (Lys-Gly) (interchain with G-Cter in SUMO2) linkage. The C2H2-type 1 zinc-finger motif lies at tyrosine 209–histidine 231. The C2H2-type 2; degenerate zinc finger occupies tyrosine 265–histidine 286. Over residues lysine 290–serine 317 the composition is skewed to basic and acidic residues. Residues lysine 290 to lysine 318 form a disordered region. Residues lysine 312 to aspartate 552 are interaction with SLBP/pre-mRNA complex. 3 consecutive C2H2-type zinc fingers follow at residues tyrosine 320–histidine 342, tyrosine 347–histidine 369, and serine 375–histidine 397. The C2H2-type 6; degenerate zinc-finger motif lies at tyrosine 403–histidine 425. Residue lysine 419 forms a Glycyl lysine isopeptide (Lys-Gly) (interchain with G-Cter in SUMO2) linkage. 4 C2H2-type zinc fingers span residues tyrosine 431–histidine 453, histidine 459–histidine 481, tyrosine 487–histidine 509, and tyrosine 515–histidine 537. Residues lysine 549 and lysine 558 each participate in a glycyl lysine isopeptide (Lys-Gly) (interchain with G-Cter in SUMO2) cross-link. C2H2-type zinc fingers lie at residues phenylalanine 562–histidine 584 and phenylalanine 591–histidine 613. Lysine 635 participates in a covalent cross-link: Glycyl lysine isopeptide (Lys-Gly) (interchain with G-Cter in SUMO2). 8 C2H2-type zinc fingers span residues phenylalanine 646–histidine 668, phenylalanine 674–histidine 696, leucine 702–histidine 724, tyrosine 730–histidine 752, tyrosine 758–histidine 780, tyrosine 786–histidine 808, tyrosine 814–histidine 836, and tyrosine 842–histidine 864.

The protein belongs to the krueppel C2H2-type zinc-finger protein family. As to quaternary structure, interacts with the SLBP/pre-mRNA complex but not with SLBP alone. Interacts with LSM11 in a U7 snRNP-dependent manner.

It is found in the nucleus. Its function is as follows. Involved in histone 3'-end pre-mRNA processing by associating with U7 snRNP and interacting with SLBP/pre-mRNA complex. Increases histone 3'-end pre-mRNA processing but has no effect on U7 snRNP levels, when overexpressed. Required for cell cycle progression from G1 to S phases. In Homo sapiens (Human), this protein is Zinc finger protein 473 (ZNF473).